Consider the following 84-residue polypeptide: Cytochrome b559 subunit alpha (84 aa).

Residues 22–36 (VIHSITIPALFVAGW) traverse the membrane as a helical segment. His-24 is a heme binding site.

This sequence belongs to the PsbE/PsbF family. Heterodimer of an alpha subunit and a beta subunit. PSII is composed of 1 copy each of membrane proteins PsbA, PsbB, PsbC, PsbD, PsbE, PsbF, PsbH, PsbI, PsbJ, PsbK, PsbL, PsbM, PsbT, PsbX, PsbY, PsbZ, Psb30/Ycf12, at least 3 peripheral proteins of the oxygen-evolving complex and a large number of cofactors. It forms dimeric complexes. Heme b is required as a cofactor.

The protein resides in the plastid. It localises to the chloroplast thylakoid membrane. Its function is as follows. This b-type cytochrome is tightly associated with the reaction center of photosystem II (PSII). PSII is a light-driven water:plastoquinone oxidoreductase that uses light energy to abstract electrons from H(2)O, generating O(2) and a proton gradient subsequently used for ATP formation. It consists of a core antenna complex that captures photons, and an electron transfer chain that converts photonic excitation into a charge separation. This Porphyra purpurea (Red seaweed) protein is Cytochrome b559 subunit alpha.